A 317-amino-acid polypeptide reads, in one-letter code: Ribosomal RNA small subunit methyltransferase H (317 aa).

Residues 39-41, Asp59, Phe83, Asp104, and Gln111 each bind S-adenosyl-L-methionine; that span reads GGH.

The protein belongs to the methyltransferase superfamily. RsmH family.

It is found in the cytoplasm. The enzyme catalyses cytidine(1402) in 16S rRNA + S-adenosyl-L-methionine = N(4)-methylcytidine(1402) in 16S rRNA + S-adenosyl-L-homocysteine + H(+). In terms of biological role, specifically methylates the N4 position of cytidine in position 1402 (C1402) of 16S rRNA. The polypeptide is Ribosomal RNA small subunit methyltransferase H (Paraburkholderia phytofirmans (strain DSM 17436 / LMG 22146 / PsJN) (Burkholderia phytofirmans)).